The sequence spans 754 residues: Protein tyrosine phosphatase domain-containing protein 1 (754 aa).

Residues Y82–C253 enclose the Tyrosine-protein phosphatase domain. The Phosphocysteine intermediate role is filled by C190. Phosphoserine occurs at positions 392 and 394. Positions S487–H498 are enriched in polar residues. The disordered stretch occupies residues S487–S554. S547 is subject to Phosphoserine.

The protein belongs to the protein-tyrosine phosphatase family. Non-receptor class PTPDC1 subfamily.

In terms of biological role, may play roles in cilia formation and/or maintenance. The chain is Protein tyrosine phosphatase domain-containing protein 1 (PTPDC1) from Homo sapiens (Human).